A 354-amino-acid chain; its full sequence is 3-isopropylmalate dehydrogenase (354 aa).

NAD(+) is bound at residue 76-87; sequence GPRWDGAKERPE. Arginine 94, arginine 104, arginine 130, and aspartate 215 together coordinate substrate. The Mg(2+) site is built by aspartate 215, aspartate 239, and aspartate 243. Residue 273–285 coordinates NAD(+); sequence GSAPDIAGKNKAN.

It belongs to the isocitrate and isopropylmalate dehydrogenases family. LeuB type 1 subfamily. Homodimer. The cofactor is Mg(2+). Mn(2+) serves as cofactor.

Its subcellular location is the cytoplasm. The enzyme catalyses (2R,3S)-3-isopropylmalate + NAD(+) = 4-methyl-2-oxopentanoate + CO2 + NADH. It functions in the pathway amino-acid biosynthesis; L-leucine biosynthesis; L-leucine from 3-methyl-2-oxobutanoate: step 3/4. Catalyzes the oxidation of 3-carboxy-2-hydroxy-4-methylpentanoate (3-isopropylmalate) to 3-carboxy-4-methyl-2-oxopentanoate. The product decarboxylates to 4-methyl-2 oxopentanoate. This is 3-isopropylmalate dehydrogenase from Bacillus anthracis.